A 174-amino-acid polypeptide reads, in one-letter code: Large ribosomal subunit protein uL10 (174 aa).

This sequence belongs to the universal ribosomal protein uL10 family. As to quaternary structure, part of the ribosomal stalk of the 50S ribosomal subunit. The N-terminus interacts with L11 and the large rRNA to form the base of the stalk. The C-terminus forms an elongated spine to which L12 dimers bind in a sequential fashion forming a multimeric L10(L12)X complex.

Forms part of the ribosomal stalk, playing a central role in the interaction of the ribosome with GTP-bound translation factors. This Geobacter sulfurreducens (strain ATCC 51573 / DSM 12127 / PCA) protein is Large ribosomal subunit protein uL10.